Here is a 374-residue protein sequence, read N- to C-terminus: Chaperone protein DnaJ (374 aa).

Positions 4-68 (DYYEILGVSR…ETRNRYDRFG (65 aa)) constitute a J domain. Residues 133–215 (GGEKEIRIRH…CGGSGRRQET (83 aa)) form a CR-type zinc finger. 8 residues coordinate Zn(2+): Cys-146, Cys-149, Cys-163, Cys-166, Cys-189, Cys-192, Cys-203, and Cys-206. CXXCXGXG motif repeat units follow at residues 146–153 (CQTCKGSG), 163–170 (CTTCSGTG), 189–196 (CPTCDGAG), and 203–210 (CDVCGGSG).

Belongs to the DnaJ family. As to quaternary structure, homodimer. Zn(2+) is required as a cofactor.

The protein resides in the cytoplasm. In terms of biological role, participates actively in the response to hyperosmotic and heat shock by preventing the aggregation of stress-denatured proteins and by disaggregating proteins, also in an autonomous, DnaK-independent fashion. Unfolded proteins bind initially to DnaJ; upon interaction with the DnaJ-bound protein, DnaK hydrolyzes its bound ATP, resulting in the formation of a stable complex. GrpE releases ADP from DnaK; ATP binding to DnaK triggers the release of the substrate protein, thus completing the reaction cycle. Several rounds of ATP-dependent interactions between DnaJ, DnaK and GrpE are required for fully efficient folding. Also involved, together with DnaK and GrpE, in the DNA replication of plasmids through activation of initiation proteins. The polypeptide is Chaperone protein DnaJ (Microcystis aeruginosa (strain NIES-843 / IAM M-2473)).